An 80-amino-acid polypeptide reads, in one-letter code: MARIMEPLARKIFKGVLAAELVGVAGAYCLFKKMHSSQDFRQTMSKKFPFILEVYYKSIEQSGMYGVREKDEEKWLTSKN.

A helical membrane pass occupies residues Gly15–Phe31.

The protein localises to the mitochondrion membrane. The polypeptide is Protein CEBPZOS (Mus musculus (Mouse)).